Reading from the N-terminus, the 305-residue chain is UDP-3-O-acyl-N-acetylglucosamine deacetylase (305 aa).

Residues His78, His237, and Asp241 each contribute to the Zn(2+) site. His264 acts as the Proton donor in catalysis.

Belongs to the LpxC family. The cofactor is Zn(2+).

The enzyme catalyses a UDP-3-O-[(3R)-3-hydroxyacyl]-N-acetyl-alpha-D-glucosamine + H2O = a UDP-3-O-[(3R)-3-hydroxyacyl]-alpha-D-glucosamine + acetate. Its pathway is glycolipid biosynthesis; lipid IV(A) biosynthesis; lipid IV(A) from (3R)-3-hydroxytetradecanoyl-[acyl-carrier-protein] and UDP-N-acetyl-alpha-D-glucosamine: step 2/6. Functionally, catalyzes the hydrolysis of UDP-3-O-myristoyl-N-acetylglucosamine to form UDP-3-O-myristoylglucosamine and acetate, the committed step in lipid A biosynthesis. This is UDP-3-O-acyl-N-acetylglucosamine deacetylase from Burkholderia ambifaria (strain ATCC BAA-244 / DSM 16087 / CCUG 44356 / LMG 19182 / AMMD) (Burkholderia cepacia (strain AMMD)).